A 492-amino-acid polypeptide reads, in one-letter code: Bifunctional protein GlmU (492 aa).

The segment at methionine 1 to arginine 238 is pyrophosphorylase. Residues leucine 9 to glycine 12, lysine 23, glutamine 80, and glycine 85 to threonine 86 contribute to the UDP-N-acetyl-alpha-D-glucosamine site. Aspartate 111 is a Mg(2+) binding site. UDP-N-acetyl-alpha-D-glucosamine contacts are provided by glycine 148, glutamate 163, asparagine 178, and asparagine 236. Asparagine 236 provides a ligand contact to Mg(2+). Residues valine 239–alanine 259 form a linker region. Residues glycine 260–glutamate 492 form an N-acetyltransferase region. UDP-N-acetyl-alpha-D-glucosamine contacts are provided by arginine 341 and lysine 359. Residue histidine 371 is the Proton acceptor of the active site. 2 residues coordinate UDP-N-acetyl-alpha-D-glucosamine: tyrosine 374 and asparagine 385. Acetyl-CoA contacts are provided by residues alanine 388, asparagine 394–tyrosine 395, serine 413, and alanine 431. Positions glutamate 469 to glutamate 483 are enriched in low complexity. The disordered stretch occupies residues glutamate 469–glutamate 492.

This sequence in the N-terminal section; belongs to the N-acetylglucosamine-1-phosphate uridyltransferase family. It in the C-terminal section; belongs to the transferase hexapeptide repeat family. In terms of assembly, homotrimer. It depends on Mg(2+) as a cofactor.

The protein localises to the cytoplasm. The catalysed reaction is alpha-D-glucosamine 1-phosphate + acetyl-CoA = N-acetyl-alpha-D-glucosamine 1-phosphate + CoA + H(+). The enzyme catalyses N-acetyl-alpha-D-glucosamine 1-phosphate + UTP + H(+) = UDP-N-acetyl-alpha-D-glucosamine + diphosphate. It functions in the pathway nucleotide-sugar biosynthesis; UDP-N-acetyl-alpha-D-glucosamine biosynthesis; N-acetyl-alpha-D-glucosamine 1-phosphate from alpha-D-glucosamine 6-phosphate (route II): step 2/2. Its pathway is nucleotide-sugar biosynthesis; UDP-N-acetyl-alpha-D-glucosamine biosynthesis; UDP-N-acetyl-alpha-D-glucosamine from N-acetyl-alpha-D-glucosamine 1-phosphate: step 1/1. It participates in bacterial outer membrane biogenesis; LPS lipid A biosynthesis. Functionally, catalyzes the last two sequential reactions in the de novo biosynthetic pathway for UDP-N-acetylglucosamine (UDP-GlcNAc). The C-terminal domain catalyzes the transfer of acetyl group from acetyl coenzyme A to glucosamine-1-phosphate (GlcN-1-P) to produce N-acetylglucosamine-1-phosphate (GlcNAc-1-P), which is converted into UDP-GlcNAc by the transfer of uridine 5-monophosphate (from uridine 5-triphosphate), a reaction catalyzed by the N-terminal domain. In Mycolicibacterium vanbaalenii (strain DSM 7251 / JCM 13017 / BCRC 16820 / KCTC 9966 / NRRL B-24157 / PYR-1) (Mycobacterium vanbaalenii), this protein is Bifunctional protein GlmU.